The following is a 258-amino-acid chain: Acetylglutamate kinase (258 aa).

Substrate is bound by residues 40-41, arginine 62, and asparagine 158; that span reads GG.

The protein belongs to the acetylglutamate kinase family. ArgB subfamily.

The protein resides in the cytoplasm. The enzyme catalyses N-acetyl-L-glutamate + ATP = N-acetyl-L-glutamyl 5-phosphate + ADP. It participates in amino-acid biosynthesis; L-arginine biosynthesis; N(2)-acetyl-L-ornithine from L-glutamate: step 2/4. Its function is as follows. Catalyzes the ATP-dependent phosphorylation of N-acetyl-L-glutamate. This Azobacteroides pseudotrichonymphae genomovar. CFP2 protein is Acetylglutamate kinase.